Consider the following 216-residue polypeptide: MSELVMDSAFFGHVLQDMGALIEKERDYLTGLDSDIGDGDHGINLSIGFREVNKQLDELLTVSPDIATLLKKSGMILLGKVGGASGPLYGSFFMKCGADVPGKTEVNFDELCGMIINGAAAVQHRGKAELGDKTMMDAFLPGVEVLQNRDTNADPIETFSAFVDAMHAGAQSTIPLIAKKGRALRLGERAIGHLDPGSESSWMLMNVILENLKKAV.

Residues 9–210 enclose the DhaL domain; that stretch reads AFFGHVLQDM…SWMLMNVILE (202 aa). Positions 33, 38, and 40 each coordinate Mg(2+). ADP is bound by residues 41 to 44, 84 to 85, glycine 126, methionine 135, arginine 182, and 195 to 197; these read HGIN, AS, and DPG.

As to quaternary structure, homodimer. The dihydroxyacetone kinase complex is composed of a homodimer of DhaM, a homodimer of DhaK and the subunit DhaL. Mg(2+) serves as cofactor.

It localises to the cytoplasm. The catalysed reaction is dihydroxyacetone + phosphoenolpyruvate = dihydroxyacetone phosphate + pyruvate. The protein operates within polyol metabolism; glycerol degradation. Functionally, ADP-binding subunit of the dihydroxyacetone kinase, which is responsible for the phosphoenolpyruvate (PEP)-dependent phosphorylation of dihydroxyacetone. DhaL-ADP is converted to DhaL-ATP via a phosphoryl group transfer from DhaM and transmits it to dihydroxyacetone binds to DhaK. The chain is PEP-dependent dihydroxyacetone kinase 2, ADP-binding subunit DhaL from Listeria innocua serovar 6a (strain ATCC BAA-680 / CLIP 11262).